A 1641-amino-acid chain; its full sequence is Vitellogenin-1 (1641 aa).

An N-terminal signal peptide occupies residues 1 to 18 (MWYLAFLLIIGAYAADHA). One can recognise a Vitellogenin domain in the interval 19–790 (WETGNEYHYL…SQDTTVPKSS (772 aa)). The cysteines at positions 172 and 211 are disulfide-linked. Over residues 322-334 (LRQPSVSLNSMEA) the composition is skewed to polar residues. Residues 322–372 (LRQPSVSLNSMEARSSENSNEENRSDDDRSNFLSNSGEEREYLQSKPTLNE) are disordered. The span at 342 to 351 (EENRSDDDRS) shows a compositional bias: basic and acidic residues. N344, N549, N566, N831, N875, N898, N1001, N1053, N1268, N1393, N1396, N1505, and N1523 each carry an N-linked (GlcNAc...) asparagine glycan. The VWFD domain occupies 1410-1597 (ESVCVLDKTH…TYAMTQESCQ (188 aa)). C1435 and C1596 are oxidised to a cystine. Residues 1594 to 1641 (ESCQGPAPENKRKAEQSTCMSRSYRPSDVISDREAGRSSTKNRGWGYH) are disordered.

In terms of tissue distribution, hemolymph.

Its subcellular location is the secreted. Its function is as follows. Precursor of the egg-yolk proteins that are sources of nutrients during embryonic development. The chain is Vitellogenin-1 from Solenopsis invicta (Red imported fire ant).